Reading from the N-terminus, the 291-residue chain is Sulfotransferase 1A1 (291 aa).

44-49 provides a ligand contact to 3'-phosphoadenylyl sulfate; that stretch reads KSGTNW. Residue 102–104 participates in substrate binding; it reads KTH. H104 acts as the Proton acceptor in catalysis. Residues R126, S134, Y189, 223-228, and 251-255 each bind 3'-phosphoadenylyl sulfate; these read TSFKKM and FMRKG. A Phosphoserine modification is found at S134.

Belongs to the sulfotransferase 1 family. Homodimer. Expressed in brain, colon, liver, and small intestine of mice colonized with B.ovatus and L.plantarum.

It is found in the cytoplasm. It carries out the reaction a phenol + 3'-phosphoadenylyl sulfate = an aryl sulfate + adenosine 3',5'-bisphosphate + H(+). It catalyses the reaction 17beta-estradiol + 3'-phosphoadenylyl sulfate = 17beta-estradiol 3-sulfate + adenosine 3',5'-bisphosphate + H(+). The catalysed reaction is 4-ethylphenol + 3'-phosphoadenylyl sulfate = 4-ethylphenyl sulfate + adenosine 3',5'-bisphosphate + H(+). The enzyme catalyses 4-nitrophenol + 3'-phosphoadenylyl sulfate = 4-nitrophenyl sulfate + adenosine 3',5'-bisphosphate. It carries out the reaction dopamine + 3'-phosphoadenylyl sulfate = dopamine 3-O-sulfate + adenosine 3',5'-bisphosphate + H(+). It catalyses the reaction dopamine + 3'-phosphoadenylyl sulfate = dopamine 4-O-sulfate + adenosine 3',5'-bisphosphate + H(+). The catalysed reaction is 3,3',5-triiodo-L-thyronine + 3'-phosphoadenylyl sulfate = 3,3',5-triiodo-L-thyronine sulfate + adenosine 3',5'-bisphosphate + H(+). The enzyme catalyses 3,3',5'-triiodo-L-thyronine + 3'-phosphoadenylyl sulfate = 3,3',5'-triiodo-L-thyronine sulfate + adenosine 3',5'-bisphosphate + H(+). It carries out the reaction 3,3'-diiodo-L-thyronine + 3'-phosphoadenylyl sulfate = 3,3'-diiodo-L-thyronine sulfate + adenosine 3',5'-bisphosphate + H(+). It catalyses the reaction L-thyroxine + 3'-phosphoadenylyl sulfate = L-thyroxine sulfate + adenosine 3',5'-bisphosphate + H(+). Functionally, sulfotransferase that utilizes 3'-phospho-5'-adenylyl sulfate (PAPS) as sulfonate donor to catalyze the sulfate conjugation of a wide variety of acceptor molecules bearing a hydroxyl or an amine group. Sulfonation increases the water solubility of most compounds, and therefore their renal excretion, but it can also result in bioactivation to form active metabolites. Displays broad substrate specificity for small phenolic compounds. Plays an important role in the sulfonation of endogenous molecules such as steroid hormones. Mediates also the metabolic activation of carcinogenic N-hydroxyarylamines leading to highly reactive intermediates capable of forming DNA adducts, potentially resulting in mutagenesis. May play a role in gut microbiota-host metabolic interaction. O-sulfonates 4-ethylphenol (4-EP), a dietary tyrosine-derived metabolite produced by gut bacteria. The product 4-EPS crosses the blood-brain barrier and may negatively regulate oligodendrocyte maturation and myelination, affecting the functional connectivity of different brain regions associated with the limbic system. Catalyzes the sulfate conjugation of dopamine. Catalyzes the sulfation of T4 (L-thyroxine/3,5,3',5'-tetraiodothyronine), T3 (3,5,3'-triiodothyronine), rT3 (3,3',5'-triiodothyronine) and 3,3'-T2 (3,3'-diiodothyronine), with a substrate preference of 3,3'-T2 &gt; rT3 &gt; T3 &gt; T4. The protein is Sulfotransferase 1A1 (Sult1a1) of Mus musculus (Mouse).